Consider the following 148-residue polypeptide: Large ribosomal subunit protein uL15 (148 aa).

Basic residues predominate over residues 1–30; the sequence is MPSRLRKTRKLRGHVSHGHGRIGKHRKHPG. Residues 1-39 form a disordered region; that stretch reads MPSRLRKTRKLRGHVSHGHGRIGKHRKHPGGRGNAGGLH. The residue at position 39 (H39) is a (3S)-3-hydroxyhistidine. An N6-acetyllysine mark is found at K47 and K55. S68 carries the post-translational modification Phosphoserine. The residue at position 110 (K110) is an N6-acetyllysine.

It belongs to the universal ribosomal protein uL15 family. As to quaternary structure, component of the large ribosomal subunit. In terms of processing, hydroxylated on His-39 by MINA.

The protein localises to the cytoplasm. Component of the large ribosomal subunit. The ribosome is a large ribonucleoprotein complex responsible for the synthesis of proteins in the cell. This is Large ribosomal subunit protein uL15 (RPL27A) from Macaca fascicularis (Crab-eating macaque).